Reading from the N-terminus, the 25-residue chain is Caerin-2.3 (25 aa).

As to expression, expressed by the skin parotoid and/or rostral glands.

Its subcellular location is the secreted. Functionally, acts as a male sex pheromone that attracts females. Has no antimicrobial activity. The sequence is that of Caerin-2.3 from Ranoidea caerulea (Green tree frog).